The following is a 211-amino-acid chain: Arginine exporter protein ArgO (211 aa).

Helical transmembrane passes span 1–21 (MISY…PLGP), 37–57 (LMIA…GIFG), 68–88 (LLAL…LGAL), 111–131 (IIAT…DTFV), 147–167 (WFAL…ALLA), and 179–199 (AQRI…FQLA).

Belongs to the LysE/ArgO transporter (TC 2.A.75) family.

The protein resides in the cell inner membrane. It carries out the reaction L-arginine(in) = L-arginine(out). Involved in the export of arginine. Important to control the intracellular level of arginine and the correct balance between arginine and lysine. The protein is Arginine exporter protein ArgO of Salmonella enteritidis PT4 (strain P125109).